The chain runs to 210 residues: 3-oxo-tetronate 4-phosphate decarboxylase (210 aa).

The active-site Proton acceptor is the Glu-74. Glu-74, His-93, and His-95 together coordinate Zn(2+). Residue Tyr-120 is the Proton donor of the active site. His-160 contributes to the Zn(2+) binding site.

Belongs to the aldolase class II family. AraD/FucA subfamily. Zn(2+) is required as a cofactor.

It carries out the reaction 3-dehydro-4-O-phospho-D-erythronate + H(+) = dihydroxyacetone phosphate + CO2. The catalysed reaction is 3-dehydro-4-O-phospho-L-erythronate + H(+) = dihydroxyacetone phosphate + CO2. Its function is as follows. Catalyzes the decarboxylation of 3-oxo-tetronate 4-phosphate to dihydroxyacetone phosphate (DHAP) and CO(2). The chain is 3-oxo-tetronate 4-phosphate decarboxylase from Haemophilus influenzae (strain ATCC 51907 / DSM 11121 / KW20 / Rd).